A 210-amino-acid chain; its full sequence is 7-carboxy-7-deazaguanine synthase (210 aa).

Residues 12–14 (LQG) and arginine 27 each bind substrate. The region spanning 18–210 (QAGKAAVFCR…VQTHKYLGLP (193 aa)) is the Radical SAM core domain. Residues cysteine 31, cysteine 46, and cysteine 49 each contribute to the [4Fe-4S] cluster site. Position 51 (threonine 51) interacts with Mg(2+). A substrate-binding site is contributed by threonine 90. S-adenosyl-L-methionine contacts are provided by residues glycine 92, 133–135 (SPK), and 173–176 (QPMD). Proline 210 contributes to the substrate binding site.

The protein belongs to the radical SAM superfamily. 7-carboxy-7-deazaguanine synthase family. Homodimer. Requires [4Fe-4S] cluster as cofactor. The cofactor is S-adenosyl-L-methionine. Mg(2+) serves as cofactor.

The catalysed reaction is 6-carboxy-5,6,7,8-tetrahydropterin + H(+) = 7-carboxy-7-deazaguanine + NH4(+). It functions in the pathway purine metabolism; 7-cyano-7-deazaguanine biosynthesis. In terms of biological role, catalyzes the complex heterocyclic radical-mediated conversion of 6-carboxy-5,6,7,8-tetrahydropterin (CPH4) to 7-carboxy-7-deazaguanine (CDG), a step common to the biosynthetic pathways of all 7-deazapurine-containing compounds. In Caulobacter vibrioides (strain ATCC 19089 / CIP 103742 / CB 15) (Caulobacter crescentus), this protein is 7-carboxy-7-deazaguanine synthase.